The chain runs to 538 residues: Chaperonin GroEL (538 aa).

Residues threonine 29–proline 32, aspartate 86–threonine 90, glycine 413, aspartate 479–leucine 481, and aspartate 495 contribute to the ATP site.

The protein belongs to the chaperonin (HSP60) family. Forms a cylinder of 14 subunits composed of two heptameric rings stacked back-to-back. Interacts with the co-chaperonin GroES.

The protein localises to the cytoplasm. It catalyses the reaction ATP + H2O + a folded polypeptide = ADP + phosphate + an unfolded polypeptide.. Its function is as follows. Together with its co-chaperonin GroES, plays an essential role in assisting protein folding. The GroEL-GroES system forms a nano-cage that allows encapsulation of the non-native substrate proteins and provides a physical environment optimized to promote and accelerate protein folding. In Thermotoga petrophila (strain ATCC BAA-488 / DSM 13995 / JCM 10881 / RKU-1), this protein is Chaperonin GroEL.